The following is a 78-amino-acid chain: ATP synthase subunit c (78 aa).

2 helical membrane passes run 11–31 (FIGA…VGHV) and 53–73 (LFVG…IALL).

Belongs to the ATPase C chain family. In terms of assembly, F-type ATPases have 2 components, F(1) - the catalytic core - and F(0) - the membrane proton channel. F(1) has five subunits: alpha(3), beta(3), gamma(1), delta(1), epsilon(1). F(0) has four main subunits: a(1), b(1), b'(1) and c(10-14). The alpha and beta chains form an alternating ring which encloses part of the gamma chain. F(1) is attached to F(0) by a central stalk formed by the gamma and epsilon chains, while a peripheral stalk is formed by the delta, b and b' chains.

The protein localises to the cell inner membrane. Functionally, f(1)F(0) ATP synthase produces ATP from ADP in the presence of a proton or sodium gradient. F-type ATPases consist of two structural domains, F(1) containing the extramembraneous catalytic core and F(0) containing the membrane proton channel, linked together by a central stalk and a peripheral stalk. During catalysis, ATP synthesis in the catalytic domain of F(1) is coupled via a rotary mechanism of the central stalk subunits to proton translocation. In terms of biological role, key component of the F(0) channel; it plays a direct role in translocation across the membrane. A homomeric c-ring of between 10-14 subunits forms the central stalk rotor element with the F(1) delta and epsilon subunits. The protein is ATP synthase subunit c of Cereibacter sphaeroides (strain ATCC 17025 / ATH 2.4.3) (Rhodobacter sphaeroides).